Consider the following 283-residue polypeptide: Methyltransferase cpsF (283 aa).

The protein belongs to the methyltransferase superfamily. LaeA methyltransferase family.

The catalysed reaction is campesine A + S-adenosyl-L-methionine = campesine B + S-adenosyl-L-homocysteine + H(+). The protein operates within alkaloid biosynthesis. Its function is as follows. Methyltransferase; part of the gene cluster that mediates the biosynthesis of campesine G, a dimeric indole piperazine alkaloid that shows good insecticidal activity Galleria mellonella. Within the pathway, cpsF methylates campesine A at N13 of piperazine ring to produce campesine B. The non-canonical non-ribosomal peptide synthetase cpsA catalyzes the first steps of the pathway by producing L-tryptophanal and L-valinal from their respective amino-acids. These products condensate spontaneously to form trypyl-valyl pyrazine also known as didehydrocampesine A. The NmrA-like family domain-containing oxidoreductase cpsB is the next enzyme in cps pathway and reduces the unstable didehydrocampesine A to campesine A. The methyltransferase cpsF and the acetyltransferase cpsE both recognize N13 of piperazine ring to carry out methylation and acetylation of campesine A to produce campesine C and B, respectively. The cytochrome P450 monooxygenase cpsD then acts as a dimerase that catalyzes oxidative heterocoupling between campesine B and C to produce heterodimers with unexpected 6/5/6/6/6/6/5/6 eight-ring scaffold called campesine D. Finally,the cytochrome P450 monooxygenase cpsC is a regioselective dehydrogenase that catalyzes dehydrogenation reaction towards C2-N1 to produce campesine G. This Aspergillus campestris (strain IBT 28561) protein is Methyltransferase cpsF.